The primary structure comprises 200 residues: GTP cyclohydrolase-2 (200 aa).

Residue 49 to 53 coordinates GTP; it reads RVHSE. 3 residues coordinate Zn(2+): C54, C65, and C67. Residues Q70, 92–94, and T114 each bind GTP; that span reads EGR. Residue D126 is the Proton acceptor of the active site. R128 functions as the Nucleophile in the catalytic mechanism. Residues T149 and K154 each coordinate GTP.

Belongs to the GTP cyclohydrolase II family. As to quaternary structure, homodimer. It depends on Zn(2+) as a cofactor.

It catalyses the reaction GTP + 4 H2O = 2,5-diamino-6-hydroxy-4-(5-phosphoribosylamino)-pyrimidine + formate + 2 phosphate + 3 H(+). It participates in cofactor biosynthesis; riboflavin biosynthesis; 5-amino-6-(D-ribitylamino)uracil from GTP: step 1/4. Its function is as follows. Catalyzes the conversion of GTP to 2,5-diamino-6-ribosylamino-4(3H)-pyrimidinone 5'-phosphate (DARP), formate and pyrophosphate. This is GTP cyclohydrolase-2 from Klebsiella pneumoniae (strain 342).